The sequence spans 415 residues: Esterase FrsA (415 aa).

It belongs to the FrsA family.

It catalyses the reaction a carboxylic ester + H2O = an alcohol + a carboxylate + H(+). Catalyzes the hydrolysis of esters. This is Esterase FrsA from Yersinia enterocolitica serotype O:8 / biotype 1B (strain NCTC 13174 / 8081).